Consider the following 232-residue polypeptide: Fibrillarin-like rRNA/tRNA 2'-O-methyltransferase (232 aa).

S-adenosyl-L-methionine contacts are provided by residues threonine 89–threonine 90, glutamate 108–phenylalanine 109, aspartate 133–alanine 134, and aspartate 153–glutamine 156.

The protein belongs to the methyltransferase superfamily. Fibrillarin family. As to quaternary structure, interacts with nop5. Component of box C/D small ribonucleoprotein (sRNP) particles that contain rpl7ae, FlpA and nop5, plus a guide RNA. These sRNP particles form homodimers, giving rise to an asymmetric holoenzyme.

Functionally, involved in pre-rRNA and tRNA processing. Utilizes the methyl donor S-adenosyl-L-methionine to catalyze the site-specific 2'-hydroxyl methylation of ribose moieties in rRNA and tRNA. Site specificity is provided by a guide RNA that base pairs with the substrate. Methylation occurs at a characteristic distance from the sequence involved in base pairing with the guide RNA. This chain is Fibrillarin-like rRNA/tRNA 2'-O-methyltransferase, found in Saccharolobus solfataricus (strain ATCC 35092 / DSM 1617 / JCM 11322 / P2) (Sulfolobus solfataricus).